The primary structure comprises 951 residues: Protein translocase subunit SecA (951 aa).

ATP-binding positions include Q90, 108 to 112 (GEGKT), and D509.

It belongs to the SecA family. As to quaternary structure, monomer and homodimer. Part of the essential Sec protein translocation apparatus which comprises SecA, SecYEG and auxiliary proteins SecDF. Other proteins may also be involved.

The protein resides in the cell inner membrane. It is found in the cellular thylakoid membrane. The protein localises to the cytoplasm. It catalyses the reaction ATP + H2O + cellular proteinSide 1 = ADP + phosphate + cellular proteinSide 2.. Functionally, part of the Sec protein translocase complex. Interacts with the SecYEG preprotein conducting channel. Has a central role in coupling the hydrolysis of ATP to the transfer of proteins into and across the cell membrane, serving as an ATP-driven molecular motor driving the stepwise translocation of polypeptide chains across the membrane. In terms of biological role, probably participates in protein translocation into and across both the cytoplasmic and thylakoid membranes in cyanobacterial cells. The polypeptide is Protein translocase subunit SecA (Prochlorococcus marinus (strain MIT 9303)).